Here is a 190-residue protein sequence, read N- to C-terminus: MKRLISCLTIICALNASAAAETTSNPCSRWISFLKPVCQRIHQTWAEGHDDMYFSGYAWHNRYVYSNEKIKSYNETAWGGGLGKSLFDEKGNWHGLYAIAFLDSHRHFEPAVGYAYLKTASVNKDLKAGLGYSVLVTSRVDYDNVPIPGALPWAALFYKRITIAATYIPGSSREGHENGNVLYMLGKISL.

Positions 1-18 are cleaved as a signal peptide; the sequence is MKRLISCLTIICALNASA. Residues histidine 60, aspartate 103, and serine 104 contribute to the active site.

It belongs to the lipid A palmitoyltransferase family. Homodimer.

The protein localises to the cell outer membrane. The catalysed reaction is a lipid A + a 1,2-diacyl-sn-glycero-3-phosphocholine = a hepta-acyl lipid A + a 2-acyl-sn-glycero-3-phosphocholine. It catalyses the reaction a lipid IVA + a 1,2-diacyl-sn-glycero-3-phosphocholine = a lipid IVB + a 2-acyl-sn-glycero-3-phosphocholine. It carries out the reaction a lipid IIA + a 1,2-diacyl-sn-glycero-3-phosphocholine = a lipid IIB + a 2-acyl-sn-glycero-3-phosphocholine. Functionally, transfers a fatty acid residue from the sn-1 position of a phospholipid to the N-linked hydroxyfatty acid chain on the proximal unit of lipid A or its precursors. The sequence is that of Lipid A acyltransferase PagP from Legionella pneumophila (strain Corby).